The following is a 49-amino-acid chain: Large ribosomal subunit protein bL33A (49 aa).

This sequence belongs to the bacterial ribosomal protein bL33 family.

The chain is Large ribosomal subunit protein bL33A from Mycoplasmopsis agalactiae (strain NCTC 10123 / CIP 59.7 / PG2) (Mycoplasma agalactiae).